Reading from the N-terminus, the 49-residue chain is Large ribosomal subunit protein eL40 (49 aa).

The protein belongs to the eukaryotic ribosomal protein eL40 family.

In Methanococcoides burtonii (strain DSM 6242 / NBRC 107633 / OCM 468 / ACE-M), this protein is Large ribosomal subunit protein eL40.